Consider the following 549-residue polypeptide: MEADFVIIGSGSAGSAMAYRLSEDGRYSVIVIEYGVPDVGPLIQMPAALSFPMNMETYDWGFSSEPEPHIGGRSLVTPRGKVLGGSSSINGMVYVRGHACDFDHWSQSGARGWAYADVLPYFKRMENSQGGQEGWRGTNGPLYVQRGKRDNPLFHAFVEAGHQAGFEVADDYNGEKQEGFGPMEQTIHNGRRWSAANAYLKPALKRPNVKLVKGFARKIVLEGKRAVGVEIEAGRTFSTIRARREVIIAASSINSPKLLMLSGIGPAAHLKEHGIDLVADRPGVGQNLQDHLEVYIQQECTQPITLYSELNLFSKARIGVEWLLFKTGDGATNHFESAAFVRSKAGVEYPDIQYHFLPVAIRYDGKAAAQSHGFQAHVGPMRSKSRGSVTLRSANPREKPVIKFNYMSHEDDWADFRHCVRLTREIFGQAAFDPYRGAEIQPGAHVQTDDEIDNFIREHVESAFHPCGTCKMGAVDDPMAVVDPECRVIGVEGLRVADSSIFPRITNGNLNGPSIMVGEKASDHILGRTPLARSNQEPWINPRWQVSDR.

Position 4-33 (4-33 (DFVIIGSGSAGSAMAYRLSEDGRYSVIVIE)) interacts with FAD. The active-site Proton acceptor is the His465.

It belongs to the GMC oxidoreductase family. The cofactor is FAD.

It carries out the reaction choline + A = betaine aldehyde + AH2. It catalyses the reaction betaine aldehyde + NAD(+) + H2O = glycine betaine + NADH + 2 H(+). It participates in amine and polyamine biosynthesis; betaine biosynthesis via choline pathway; betaine aldehyde from choline (cytochrome c reductase route): step 1/1. Functionally, involved in the biosynthesis of the osmoprotectant glycine betaine. Catalyzes the oxidation of choline to betaine aldehyde and betaine aldehyde to glycine betaine at the same rate. In Brucella canis (strain ATCC 23365 / NCTC 10854 / RM-666), this protein is Oxygen-dependent choline dehydrogenase.